A 424-amino-acid polypeptide reads, in one-letter code: Serine--tRNA ligase (424 aa).

Residue 231 to 233 (TAE) participates in L-serine binding. 262 to 264 (RSE) is an ATP binding site. E285 provides a ligand contact to L-serine. 349–352 (EISS) contacts ATP. S385 is a binding site for L-serine.

It belongs to the class-II aminoacyl-tRNA synthetase family. Type-1 seryl-tRNA synthetase subfamily. Homodimer. The tRNA molecule binds across the dimer.

It localises to the cytoplasm. It catalyses the reaction tRNA(Ser) + L-serine + ATP = L-seryl-tRNA(Ser) + AMP + diphosphate + H(+). The catalysed reaction is tRNA(Sec) + L-serine + ATP = L-seryl-tRNA(Sec) + AMP + diphosphate + H(+). Its pathway is aminoacyl-tRNA biosynthesis; selenocysteinyl-tRNA(Sec) biosynthesis; L-seryl-tRNA(Sec) from L-serine and tRNA(Sec): step 1/1. Catalyzes the attachment of serine to tRNA(Ser). Is also able to aminoacylate tRNA(Sec) with serine, to form the misacylated tRNA L-seryl-tRNA(Sec), which will be further converted into selenocysteinyl-tRNA(Sec). This chain is Serine--tRNA ligase, found in Bacillus cereus (strain ZK / E33L).